The sequence spans 229 residues: 2-C-methyl-D-erythritol 4-phosphate cytidylyltransferase (229 aa).

Belongs to the IspD/TarI cytidylyltransferase family. IspD subfamily.

The catalysed reaction is 2-C-methyl-D-erythritol 4-phosphate + CTP + H(+) = 4-CDP-2-C-methyl-D-erythritol + diphosphate. It functions in the pathway isoprenoid biosynthesis; isopentenyl diphosphate biosynthesis via DXP pathway; isopentenyl diphosphate from 1-deoxy-D-xylulose 5-phosphate: step 2/6. Functionally, catalyzes the formation of 4-diphosphocytidyl-2-C-methyl-D-erythritol from CTP and 2-C-methyl-D-erythritol 4-phosphate (MEP). The sequence is that of 2-C-methyl-D-erythritol 4-phosphate cytidylyltransferase from Neisseria gonorrhoeae (strain NCCP11945).